Consider the following 738-residue polypeptide: Leucine-rich repeat flightless-interacting protein 1 (738 aa).

At T2 the chain carries N-acetylthreonine. A Phosphoserine modification is found at S16. The span at 40–65 (IRMKELERQQKEVEERPDKDFAEKGS) shows a compositional bias: basic and acidic residues. The interval 40–98 (IRMKELERQQKEVEERPDKDFAEKGSRNMPSLSAATLASLGGTSSRRGSGDTSISMDTE) is disordered. The span at 78–94 (SLGGTSSRRGSGDTSIS) shows a compositional bias: low complexity. S83, S84, S88, and S92 each carry phosphoserine. Residues 94–194 (SMDTEASIRE…LRQREEMLEK (101 aa)) are a coiled coil. A Glycyl lysine isopeptide (Lys-Gly) (interchain with G-Cter in SUMO1) cross-link involves residue K249. Composition is skewed to basic and acidic residues over residues 253 to 262 (VEKVGQRETL) and 277 to 297 (DCVDRGVLHPGEKAENQRPVE). The disordered stretch occupies residues 253–738 (VEKVGQRETL…SKSKEDCTMS (486 aa)). S302 bears the Phosphoserine mark. Positions 314–326 (EVQSQDQENTSIL) are enriched in polar residues. A compositionally biased stretch (basic and acidic residues) spans 330–347 (EQIESHEVTNKSDSRDSN). Residues S346 and S348 each carry the phosphoserine modification. Polar residues predominate over residues 371–380 (KNQSENSMDS). 2 stretches are compositionally biased toward basic and acidic residues: residues 381–400 (QGKENQEDLGKGSFEPRPDH) and 467–476 (SERELAHEAA). The tract at residues 479-580 (EEALTQSSQA…KNKKKKAAAP (102 aa)) is DNA-binding. Composition is skewed to polar residues over residues 483–495 (TQSSQAGGENTVT) and 520–534 (TVQSGHQDTTGPGST). Residues 535 to 553 (DTKHTSPHAKERNKAKSEQ) are compositionally biased toward basic and acidic residues. A phosphoserine mark is found at S551 and S560. Basic residues predominate over residues 563–577 (KKTKNKKKKNKKKKA). The span at 606 to 626 (RVQATDKKWAAETPELKEDPQ) shows a compositional bias: basic and acidic residues. 2 positions are modified to phosphoserine: S675 and S701. 2 stretches are compositionally biased toward basic and acidic residues: residues 691 to 703 (QADEKGIEGHSVD) and 720 to 738 (EQAREEVGNSKSKEDCTMS).

It belongs to the LRRFIP family. In terms of assembly, homodimer. May also form higher oligomers. Interacts with FLII. Interacts with MYD88. Competes with FLII for MyD88-binding, even in the absence of LPS.

The protein localises to the nucleus. It is found in the cytoplasm. Its function is as follows. Transcriptional repressor which preferentially binds to the GC-rich consensus sequence (5'-AGCCCCCGGCG-3') and may regulate expression of TNF, EGFR and PDGFA. May control smooth muscle cells proliferation following artery injury through PDGFA repression. May also bind double-stranded RNA. Positively regulates Toll-like receptor (TLR) signaling in response to agonist probably by competing with the negative FLII regulator for MYD88-binding. The sequence is that of Leucine-rich repeat flightless-interacting protein 1 (Lrrfip1) from Rattus norvegicus (Rat).